Here is a 386-residue protein sequence, read N- to C-terminus: ATP phosphoribosyltransferase regulatory subunit (386 aa).

Belongs to the class-II aminoacyl-tRNA synthetase family. HisZ subfamily. Heteromultimer composed of HisG and HisZ subunits.

It is found in the cytoplasm. The protein operates within amino-acid biosynthesis; L-histidine biosynthesis; L-histidine from 5-phospho-alpha-D-ribose 1-diphosphate: step 1/9. Its function is as follows. Required for the first step of histidine biosynthesis. May allow the feedback regulation of ATP phosphoribosyltransferase activity by histidine. In Rhodospirillum centenum (strain ATCC 51521 / SW), this protein is ATP phosphoribosyltransferase regulatory subunit.